The sequence spans 359 residues: Photosystem II protein D1 1 (359 aa).

3 helical membrane passes run 29–46, 118–133, and 142–156; these read YVGW…AATI, HFLI…EWEL, and WICV…AASA. Position 118 (His-118) interacts with chlorophyll a. Pheophytin a is bound at residue Tyr-126. Positions 170 and 189 each coordinate [CaMn4O5] cluster. Residues 197–218 form a helical membrane-spanning segment; the sequence is FHMLGVAGVFGGSLFSAMHGSL. His-198 serves as a coordination point for chlorophyll a. A quinone-binding positions include His-215 and 264 to 265; that span reads SF. Position 215 (His-215) interacts with Fe cation. Residue His-272 coordinates Fe cation. Residues 274 to 288 form a helical membrane-spanning segment; sequence FLAAWPVVGIWFTAL. The [CaMn4O5] cluster site is built by His-332, Glu-333, Asp-342, and Ala-344. The propeptide occupies 345-359; sequence AAESTPVALQAPAIG.

This sequence belongs to the reaction center PufL/M/PsbA/D family. PSII is composed of 1 copy each of membrane proteins PsbA, PsbB, PsbC, PsbD, PsbE, PsbF, PsbH, PsbI, PsbJ, PsbK, PsbL, PsbM, PsbT, PsbX, PsbY, PsbZ, Psb30/Ycf12, peripheral proteins PsbO, CyanoQ (PsbQ), PsbU, PsbV and a large number of cofactors. It forms dimeric complexes. Requires The D1/D2 heterodimer binds P680, chlorophylls that are the primary electron donor of PSII, and subsequent electron acceptors. It shares a non-heme iron and each subunit binds pheophytin, quinone, additional chlorophylls, carotenoids and lipids. D1 provides most of the ligands for the Mn4-Ca-O5 cluster of the oxygen-evolving complex (OEC). There is also a Cl(-1) ion associated with D1 and D2, which is required for oxygen evolution. The PSII complex binds additional chlorophylls, carotenoids and specific lipids. as cofactor. Post-translationally, tyr-161 forms a radical intermediate that is referred to as redox-active TyrZ, YZ or Y-Z. C-terminally processed by CtpA; processing is essential to allow assembly of the oxygen-evolving complex and thus photosynthetic growth.

It is found in the cellular thylakoid membrane. The enzyme catalyses 2 a plastoquinone + 4 hnu + 2 H2O = 2 a plastoquinol + O2. Its function is as follows. Photosystem II (PSII) is a light-driven water:plastoquinone oxidoreductase that uses light energy to abstract electrons from H(2)O, generating O(2) and a proton gradient subsequently used for ATP formation. It consists of a core antenna complex that captures photons, and an electron transfer chain that converts photonic excitation into a charge separation. The D1/D2 (PsbA/PsbD) reaction center heterodimer binds P680, the primary electron donor of PSII as well as several subsequent electron acceptors. This Parasynechococcus marenigrum (strain WH8102) protein is Photosystem II protein D1 1.